Reading from the N-terminus, the 206-residue chain is LexA repressor (206 aa).

Positions 28-48 (RAEIARELGFRSANAAEEHLK) form a DNA-binding region, H-T-H motif. Residues serine 123 and lysine 160 each act as for autocatalytic cleavage activity in the active site.

Belongs to the peptidase S24 family. Homodimer.

The catalysed reaction is Hydrolysis of Ala-|-Gly bond in repressor LexA.. Functionally, represses a number of genes involved in the response to DNA damage (SOS response), including recA and lexA. In the presence of single-stranded DNA, RecA interacts with LexA causing an autocatalytic cleavage which disrupts the DNA-binding part of LexA, leading to derepression of the SOS regulon and eventually DNA repair. The sequence is that of LexA repressor from Vibrio campbellii (strain ATCC BAA-1116).